The chain runs to 1344 residues: DEAD-box ATP-dependent RNA helicase FANCM (1344 aa).

A disordered region spans residues Ser39 to Lys61. In terms of domain architecture, Helicase ATP-binding spans Ile124 to Thr292. Residue Leu137 to Thr144 coordinates ATP. Residues Asp240–His243 carry the DEAH box motif. The Helicase C-terminal domain occupies Lys450–Met621. 4 disordered regions span residues Val765–Glu790, Glu1110–Glu1148, Tyr1183–Asp1218, and Lys1307–Trp1344. Residues Ser1118–Ile1135 show a composition bias toward acidic residues. The segment covering Thr1207 to Asp1218 has biased composition (polar residues). The span at Gln1308–Ala1318 shows a compositional bias: basic and acidic residues.

It belongs to the DEAD box helicase family. DEAH subfamily. FANCM sub-subfamily.

Its subcellular location is the nucleus. It catalyses the reaction ATP + H2O = ADP + phosphate + H(+). Its function is as follows. Involved in ordered homologous recombination (HR) events in somatic and meiotic cells. Involved in the suppression of spontaneous HR events in somatic cells. Has an opposite function to the DNA binding cofactor MHF1 which promotes spontaneous HR. Functions in replicative repair independently of MHF1 and in a parallel pathway to the endonuclease MUS81. Acts in the same pathway as the two DNA-binding cofactors MHF1 and MHF2 to restrain class II meiotic crossover (CO), and acts exclusively with MHF1 and MHF2 during meiosis to repair DNA interstrand cross-links (ICLs). This common pathway is in parallel to the pathway that involves the RECQ4A helicase. Seems to be involved in the stabilization of recombination intermediates. Involved in DNA double-strand break (DSB) repair during meiosis. Required for synthesis-dependent strand annealing (SDSA) and to a lesser extent for single-strand annealing (SSA). May process meiotic DSB repair intermediates, possibly D-loops, driving them toward noncrossover (NCO) resolution. This is DEAD-box ATP-dependent RNA helicase FANCM from Arabidopsis thaliana (Mouse-ear cress).